The primary structure comprises 776 residues: Ecdysone receptor (776 aa).

The tract at residues 1–290 is modulating; the sequence is MYRLNIVSTN…GPTPRQQEEL (290 aa). Positions 199 to 283 are disordered; sequence NEEWISSPSP…DAKKQKKGPT (85 aa). Low complexity predominate over residues 204–213; sequence SSPSPGSVPG. Composition is skewed to polar residues over residues 227-245 and 261-270; these read TTYTTTMSNGYSSPMSTGS and SPSSSLNGYT. The segment at residues 288–363 is a DNA-binding region (nuclear receptor); it reads EELCLVCGDR…VGMRPECVVP (76 aa). 2 NR C4-type zinc fingers span residues 291-311 and 327-346; these read CLVCGDRESGYHYNALTCEGC and CKFGHACEMDMYMRRKCQEC. The NR LBD domain occupies 437–673; the sequence is NQMAVIYKLI…FLEEIWDVQD (237 aa). Residues 679–688 show a composition bias toward polar residues; that stretch reads QAQMHSHGTQ. The interval 679–776 is disordered; it reads QAQMHSHGTQ…VPGLGMLDQV (98 aa). Low complexity predominate over residues 689–745; sequence SSSSSSSSSSSSSNGSSNGNSSSNSNSSQHGPHPHPHGQQLTPNQQQHQQQHSQLQQ.

It belongs to the nuclear hormone receptor family. NR1 subfamily. In terms of assembly, heterodimer of USP and ECR. Only the heterodimer is capable of high-affinity binding to ecdysone. A peak level expression is seen in the fat body of previtellogenic female mosquitos at one and two days after eclosion, levels fall three-fold at three days posteclosion.

The protein resides in the nucleus. Its function is as follows. Receptor for ecdysone. Binds to ecdysone response elements (ECRES). The protein is Ecdysone receptor (EcR) of Aedes aegypti (Yellowfever mosquito).